The sequence spans 344 residues: Fructose-1,6-bisphosphatase class 1 (344 aa).

4 residues coordinate Mg(2+): E92, D115, L117, and D118. Substrate-binding positions include 118 to 121, N211, Y244, and K274; that span reads DGSS. E280 contacts Mg(2+).

Belongs to the FBPase class 1 family. In terms of assembly, homotetramer. It depends on Mg(2+) as a cofactor.

The protein resides in the cytoplasm. The catalysed reaction is beta-D-fructose 1,6-bisphosphate + H2O = beta-D-fructose 6-phosphate + phosphate. The protein operates within carbohydrate biosynthesis; gluconeogenesis. This chain is Fructose-1,6-bisphosphatase class 1, found in Aeromonas salmonicida (strain A449).